Reading from the N-terminus, the 594-residue chain is UvrABC system protein C (594 aa).

In terms of domain architecture, GIY-YIG spans 14 to 91 (DQPGCYLMKD…IKKYDPKYNI (78 aa)). A UVR domain is found at 196–231 (KEIRSELETKMYEASEKLEFERAKELRDQIAHIDAI).

The protein belongs to the UvrC family. As to quaternary structure, interacts with UvrB in an incision complex.

The protein localises to the cytoplasm. Its function is as follows. The UvrABC repair system catalyzes the recognition and processing of DNA lesions. UvrC both incises the 5' and 3' sides of the lesion. The N-terminal half is responsible for the 3' incision and the C-terminal half is responsible for the 5' incision. The chain is UvrABC system protein C from Bacillus mycoides (strain KBAB4) (Bacillus weihenstephanensis).